Reading from the N-terminus, the 366-residue chain is Peptide chain release factor 2 (366 aa).

Gln-251 is modified (N5-methylglutamine).

It belongs to the prokaryotic/mitochondrial release factor family. Post-translationally, methylated by PrmC. Methylation increases the termination efficiency of RF2.

It is found in the cytoplasm. Functionally, peptide chain release factor 2 directs the termination of translation in response to the peptide chain termination codons UGA and UAA. This chain is Peptide chain release factor 2, found in Exiguobacterium sp. (strain ATCC BAA-1283 / AT1b).